The sequence spans 757 residues: RNA-directed RNA polymerase catalytic subunit (757 aa).

2 consecutive short sequence motifs (nuclear localization signal) follow at residues 187 to 195 (RKRRVRDNM) and 203 to 216 (RTIG…NRRG). Residues 249–256 (RGFVYFVE) are promoter-binding site. The RdRp catalytic domain occupies 286–483 (VRKMMTNSQD…GINMSKKKSY (198 aa)).

It belongs to the influenza viruses polymerase PB1 family. Influenza RNA polymerase is composed of three subunits: PB1, PB2 and PA. Interacts (via N-terminus) with PA (via C-terminus). Interacts (via C-terminus) with PB2 (via N-terminus); this interaction is essential for transcription initiation. Interacts (via C-terminus) with human PKP2 (via N-terminus); the interaction competitively inhibits the interaction between the RNA polymerase subunits PB1 and PB2. Phosphorylated by host PRKCA.

The protein resides in the host nucleus. Its subcellular location is the host cytoplasm. The enzyme catalyses RNA(n) + a ribonucleoside 5'-triphosphate = RNA(n+1) + diphosphate. Functionally, RNA-dependent RNA polymerase which is responsible for replication and transcription of virus RNA segments. The transcription of viral mRNAs occurs by a unique mechanism called cap-snatching. 5' methylated caps of cellular mRNAs are cleaved after 10-13 nucleotides by PA. In turn, these short capped RNAs are used as primers by PB1 for transcription of viral mRNAs. During virus replication, PB1 initiates RNA synthesis and copy vRNA into complementary RNA (cRNA) which in turn serves as a template for the production of more vRNAs. This chain is RNA-directed RNA polymerase catalytic subunit, found in Aves (Human).